The chain runs to 1150 residues: ATP-dependent helicase/deoxyribonuclease subunit B (1150 aa).

An ATP-binding site is contributed by 8-15; it reads GRAGSGKS. [4Fe-4S] cluster contacts are provided by Cys-786, Cys-1106, Cys-1109, and Cys-1115.

Belongs to the helicase family. AddB/RexB type 1 subfamily. Heterodimer of AddA and AddB. Mg(2+) is required as a cofactor. [4Fe-4S] cluster serves as cofactor.

The heterodimer acts as both an ATP-dependent DNA helicase and an ATP-dependent, dual-direction single-stranded exonuclease. Recognizes the chi site generating a DNA molecule suitable for the initiation of homologous recombination. The AddB subunit has 5' -&gt; 3' nuclease activity but not helicase activity. This is ATP-dependent helicase/deoxyribonuclease subunit B from Clostridium botulinum (strain Okra / Type B1).